We begin with the raw amino-acid sequence, 217 residues long: Glycosylphosphatidylinositol anchor biosynthesis protein 11 (217 aa).

Residue Asn-20 is glycosylated (N-linked (GlcNAc...) asparagine). Transmembrane regions (helical) follow at residues 41–61, 66–86, 107–127, 139–159, 169–189, and 197–217; these read VYVR…LYWF, DFNL…YLIF, FITL…IVLF, WLLA…VFNC, YFIS…LDWD, and VPLI…GGYI.

Belongs to the PIGF family.

It is found in the endoplasmic reticulum membrane. The protein operates within glycolipid biosynthesis; glycosylphosphatidylinositol-anchor biosynthesis. Functionally, acts in the GPI biosynthetic pathway between GlcNAc-PI synthesis and GPI transfer to protein. This chain is Glycosylphosphatidylinositol anchor biosynthesis protein 11 (GPI11), found in Kluyveromyces lactis (strain ATCC 8585 / CBS 2359 / DSM 70799 / NBRC 1267 / NRRL Y-1140 / WM37) (Yeast).